The primary structure comprises 111 residues: UPF0339 protein BP0521 (111 aa).

2 repeat units span residues Ala-9–Arg-57 and Ala-60–Gln-108. The interval Thr-86–Ala-111 is disordered.

The protein belongs to the UPF0339 family. Duplicated subfamily.

In Bordetella pertussis (strain Tohama I / ATCC BAA-589 / NCTC 13251), this protein is UPF0339 protein BP0521.